Here is a 234-residue protein sequence, read N- to C-terminus: uncharacterized protein (234 aa).

Positions 199–234 (DNQNEPLENYSDDNNFSNFDETEHVDDSEMNDDNFI) are disordered.

This is an uncharacterized protein from Buchnera aphidicola subsp. Schizaphis graminum (strain Sg).